The sequence spans 835 residues: Peptide transporter family 1 (835 aa).

Helical transmembrane passes span 86 to 106 (IFFNGFTVLCYTTPLLGSIVA), 113 to 133 (FWTIFSVSILYAIGQVVLALA), 150 to 170 (GLLIIAFGTGGIKPCVSAFGG), 183 to 203 (LFFSMFYFSINAGSMISTFIS), 222 to 242 (FGIPAILMIVATLVFMGGSFW), 325 to 345 (MFLPVPMFWALYDQQGSVWLI), 368 to 388 (LNAVLILLFIPLFQVIIYPVA), 401 to 421 (VTGGLLASLAFLITGFVQLQV), 697 to 717 (ILWQIPQIVVITAAEILFSIT), 738 to 758 (WLLTTAAGDSIIVVITILNLF), and 765 to 785 (FFVYAAAMFVVIAIFALLSIF). Residues 814–835 (PRYSIDNKGFHPDEKDTFDMHF) are disordered. Residues 821-835 (KGFHPDEKDTFDMHF) are compositionally biased toward basic and acidic residues.

It belongs to the major facilitator superfamily. Proton-dependent oligopeptide transporter (POT/PTR) (TC 2.A.17) family. As to expression, expressed specifically in the intestine.

It localises to the apical cell membrane. In terms of biological role, low-affinity peptide transporter that is necessary for proton-dependent uptake of di- or tripeptides, and to a minor extent tetrapeptides, in the intestine. Transport is independent of sodium and chloride ions. Controls the uptake of dietary fatty acids, plays a role in fatty acid synthesis and is responsible for dipeptide-induced acidification of the intestine. Regulates cellular pH differences together with the antiporter protein, nhx-2. Amino acid uptake and absorption levels influence the insulin signaling/daf-2 and let-363/TOR pathways, subsequently affecting the stress response and longevity of the organism. It is required for the uptake of the L-enantiomers of various amino acids, including L-glutamate. In response to the availability of amino acid nutrients, may play a role in promoting reproduction and fertility. This chain is Peptide transporter family 1, found in Caenorhabditis elegans.